We begin with the raw amino-acid sequence, 381 residues long: Putative 8-amino-7-oxononanoate synthase (381 aa).

Arg22 is a substrate binding site. 109–110 (GF) is a pyridoxal 5'-phosphate binding site. His134 lines the substrate pocket. Pyridoxal 5'-phosphate-binding positions include Ser182, 207-210 (DDAH), and 233-236 (TLSK). Lys236 carries the post-translational modification N6-(pyridoxal phosphate)lysine. Thr345 contributes to the substrate binding site.

The protein belongs to the class-II pyridoxal-phosphate-dependent aminotransferase family. BioF subfamily. As to quaternary structure, homodimer. The cofactor is pyridoxal 5'-phosphate.

It catalyses the reaction 6-carboxyhexanoyl-[ACP] + L-alanine + H(+) = (8S)-8-amino-7-oxononanoate + holo-[ACP] + CO2. It participates in cofactor biosynthesis; biotin biosynthesis. Its function is as follows. Catalyzes the decarboxylative condensation of pimeloyl-[acyl-carrier protein] and L-alanine to produce 8-amino-7-oxononanoate (AON), [acyl-carrier protein], and carbon dioxide. The sequence is that of Putative 8-amino-7-oxononanoate synthase (bioF) from Acidiphilium cryptum (strain JF-5).